The chain runs to 645 residues: Acetyl-coenzyme A synthetase (645 aa).

CoA contacts are provided by residues 190-193 (RGGR), T309, and N333. ATP-binding positions include 385–387 (GEP), 409–414 (DTWWQT), D498, and R513. A CoA-binding site is contributed by S521. An ATP-binding site is contributed by R524. Positions 535, 537, and 540 each coordinate Mg(2+). R582 is a binding site for CoA. K607 is subject to N6-acetyllysine.

Belongs to the ATP-dependent AMP-binding enzyme family. Requires Mg(2+) as cofactor. Post-translationally, acetylated. Deacetylation by the SIR2-homolog deacetylase activates the enzyme.

The enzyme catalyses acetate + ATP + CoA = acetyl-CoA + AMP + diphosphate. Catalyzes the conversion of acetate into acetyl-CoA (AcCoA), an essential intermediate at the junction of anabolic and catabolic pathways. AcsA undergoes a two-step reaction. In the first half reaction, AcsA combines acetate with ATP to form acetyl-adenylate (AcAMP) intermediate. In the second half reaction, it can then transfer the acetyl group from AcAMP to the sulfhydryl group of CoA, forming the product AcCoA. The polypeptide is Acetyl-coenzyme A synthetase (Beijerinckia indica subsp. indica (strain ATCC 9039 / DSM 1715 / NCIMB 8712)).